We begin with the raw amino-acid sequence, 603 residues long: Aspartate--tRNA(Asp/Asn) ligase (603 aa).

Residue Glu182 participates in L-aspartate binding. Residues 206–209 (QLFK) are aspartate. Arg228 lines the L-aspartate pocket. ATP is bound by residues 228 to 230 (RDE) and Gln237. His454 is a binding site for L-aspartate. Glu500 is a binding site for ATP. Arg507 lines the L-aspartate pocket. 552–555 (GLDR) contacts ATP.

This sequence belongs to the class-II aminoacyl-tRNA synthetase family. Type 1 subfamily. Homodimer.

It localises to the cytoplasm. It carries out the reaction tRNA(Asx) + L-aspartate + ATP = L-aspartyl-tRNA(Asx) + AMP + diphosphate. Functionally, aspartyl-tRNA synthetase with relaxed tRNA specificity since it is able to aspartylate not only its cognate tRNA(Asp) but also tRNA(Asn). Reaction proceeds in two steps: L-aspartate is first activated by ATP to form Asp-AMP and then transferred to the acceptor end of tRNA(Asp/Asn). The sequence is that of Aspartate--tRNA(Asp/Asn) ligase from Aquifex aeolicus (strain VF5).